Reading from the N-terminus, the 1039-residue chain is Probable inorganic carbon transporter subunit DabA 2 (1039 aa).

Positions 462, 464, 721, and 736 each coordinate Zn(2+).

This sequence belongs to the inorganic carbon transporter (TC 9.A.2) DabA family. As to quaternary structure, forms a complex with DabB. It depends on Zn(2+) as a cofactor.

The protein localises to the cell inner membrane. Functionally, part of an energy-coupled inorganic carbon pump. This chain is Probable inorganic carbon transporter subunit DabA 2, found in Nitrobacter hamburgensis (strain DSM 10229 / NCIMB 13809 / X14).